A 326-amino-acid polypeptide reads, in one-letter code: Acyl-CoA-binding domain-containing protein 4 (326 aa).

One can recognise an ACB domain in the interval 10 to 99 (CQKQFQAAVS…MKLVAQKVID (90 aa)). An acyl-CoA-binding positions include 21-30 (IQNLPKNGSY), 41-45 (YSYYK), Lys-67, and Tyr-86. Disordered regions lie at residues 147 to 170 (VQAAPEPSHPPKEPAPPSPESRLP) and 223 to 248 (KEAAGRELTTRSSPESPEGFGGSLMG). Ser-164 is subject to Phosphoserine.

Binds medium- and long-chain acyl-CoA esters and may function as an intracellular carrier of acyl-CoA esters. This Rattus norvegicus (Rat) protein is Acyl-CoA-binding domain-containing protein 4 (Acbd4).